The sequence spans 355 residues: Fructose-bisphosphate aldolase, cytoplasmic isozyme (355 aa).

Arg52 and Lys142 together coordinate substrate. Glu183 acts as the Proton acceptor in catalysis. Lys225 (schiff-base intermediate with dihydroxyacetone-P) is an active-site residue.

It belongs to the class I fructose-bisphosphate aldolase family.

The protein localises to the cytoplasm. It catalyses the reaction beta-D-fructose 1,6-bisphosphate = D-glyceraldehyde 3-phosphate + dihydroxyacetone phosphate. It functions in the pathway carbohydrate degradation; glycolysis; D-glyceraldehyde 3-phosphate and glycerone phosphate from D-glucose: step 4/4. In Zea mays (Maize), this protein is Fructose-bisphosphate aldolase, cytoplasmic isozyme.